A 107-amino-acid polypeptide reads, in one-letter code: Essential MCU regulator, mitochondrial (107 aa).

A mitochondrion-targeting transit peptide spans 1–52; sequence MASGAARWLVLAPVRSGALRSGPSLRKDGDVSAAWSGSGRSLVPSRSVIVTR. Residues 1 to 52 form an interaction with MAIP1 region; that stretch reads MASGAARWLVLAPVRSGALRSGPSLRKDGDVSAAWSGSGRSLVPSRSVIVTR. The Mitochondrial matrix segment spans residues 54–65; it reads GAILPKPVKMSF. The chain crosses the membrane as a helical span at residues 66–85; that stretch reads GLLRVFSIVIPFLYVGTLIS. The GXXXX[G/A/S] signature appears at 81–85; the sequence is GTLIS. Residues 86–107 lie on the Mitochondrial intermembrane side of the membrane; sequence KNFAALLEEHDIFVPEDDDDDD.

The protein belongs to the SMDT1/EMRE family. In terms of assembly, component of the uniplex complex, composed of MCU, EMRE/SMDT1, MICU1 and MICU2 (or MICU3) in a 4:4:1:1 stoichiometry. The number of EMRE/SMDT1 molecules is hovewer variable, ranging from 1 to 4 copies per uniplex complex, leading to uniplex complexes with distinct gatekeeping profiles. Interacts (via its C-terminal poly-Asp tail) with MCUR1; the interaction is direct. Unprocessed form interacts (via transit peptide) with MAIP1. Undergoes proteolytic degradation in neurons: degraded by AFG3L2 and SPG7 before SMDT1/EMRE assembly with the uniporter complex, limiting the availability of SMDT1/EMRE for MCU assembly and promoting efficient assembly of gatekeeper subunits with MCU.

Its subcellular location is the mitochondrion inner membrane. In terms of biological role, essential regulatory subunit of the mitochondrial calcium uniporter complex (uniplex), a complex that mediates calcium uptake into mitochondria. Required to bridge the calcium-sensing proteins MICU1 with the calcium-conducting subunit MCU. Acts by mediating activation of MCU and retention of MICU1 to the MCU pore, in order to ensure tight regulation of the uniplex complex and appropriate responses to intracellular calcium signaling. In Homo sapiens (Human), this protein is Essential MCU regulator, mitochondrial.